A 38-amino-acid polypeptide reads, in one-letter code: Photosystem II reaction center protein L (38 aa).

A helical membrane pass occupies residues 17-37 (SLFWGLLLIFILAVLFSSYFF).

Belongs to the PsbL family. PSII is composed of 1 copy each of membrane proteins PsbA, PsbB, PsbC, PsbD, PsbE, PsbF, PsbH, PsbI, PsbJ, PsbK, PsbL, PsbM, PsbT, PsbX, PsbY, PsbZ, Psb30/Ycf12, at least 3 peripheral proteins of the oxygen-evolving complex and a large number of cofactors. It forms dimeric complexes.

Its subcellular location is the plastid. The protein resides in the chloroplast thylakoid membrane. Functionally, one of the components of the core complex of photosystem II (PSII). PSII is a light-driven water:plastoquinone oxidoreductase that uses light energy to abstract electrons from H(2)O, generating O(2) and a proton gradient subsequently used for ATP formation. It consists of a core antenna complex that captures photons, and an electron transfer chain that converts photonic excitation into a charge separation. This subunit is found at the monomer-monomer interface and is required for correct PSII assembly and/or dimerization. The polypeptide is Photosystem II reaction center protein L (Guillardia theta (Cryptophyte)).